A 214-amino-acid chain; its full sequence is Imidazole glycerol phosphate synthase subunit HisH (214 aa).

A Glutamine amidotransferase type-1 domain is found at 3 to 211; it reads TIAVIDYDMG…VSKVIPKNLA (209 aa). Catalysis depends on C81, which acts as the Nucleophile. Residues H186 and E188 contribute to the active site.

As to quaternary structure, heterodimer of HisH and HisF.

It localises to the cytoplasm. The enzyme catalyses 5-[(5-phospho-1-deoxy-D-ribulos-1-ylimino)methylamino]-1-(5-phospho-beta-D-ribosyl)imidazole-4-carboxamide + L-glutamine = D-erythro-1-(imidazol-4-yl)glycerol 3-phosphate + 5-amino-1-(5-phospho-beta-D-ribosyl)imidazole-4-carboxamide + L-glutamate + H(+). The catalysed reaction is L-glutamine + H2O = L-glutamate + NH4(+). Its pathway is amino-acid biosynthesis; L-histidine biosynthesis; L-histidine from 5-phospho-alpha-D-ribose 1-diphosphate: step 5/9. In terms of biological role, IGPS catalyzes the conversion of PRFAR and glutamine to IGP, AICAR and glutamate. The HisH subunit catalyzes the hydrolysis of glutamine to glutamate and ammonia as part of the synthesis of IGP and AICAR. The resulting ammonia molecule is channeled to the active site of HisF. This is Imidazole glycerol phosphate synthase subunit HisH from Trichodesmium erythraeum (strain IMS101).